The following is a 206-amino-acid chain: Large ribosomal subunit protein uL3 (206 aa).

The protein belongs to the universal ribosomal protein uL3 family. In terms of assembly, part of the 50S ribosomal subunit. Forms a cluster with proteins L14 and L19.

In terms of biological role, one of the primary rRNA binding proteins, it binds directly near the 3'-end of the 23S rRNA, where it nucleates assembly of the 50S subunit. This Cytophaga hutchinsonii (strain ATCC 33406 / DSM 1761 / CIP 103989 / NBRC 15051 / NCIMB 9469 / D465) protein is Large ribosomal subunit protein uL3.